Reading from the N-terminus, the 1046-residue chain is SWI/SNF-related matrix-associated actin-dependent regulator of chromatin subfamily A member 1 (1046 aa).

The disordered stretch occupies residues 27–61 (EQPGPSTFKEEGAAAAATEGTTATEKGEKKEKITS). The span at 39–50 (AAAAATEGTTAT) shows a compositional bias: low complexity. A phosphoserine mark is found at S120 and S123. The Helicase ATP-binding domain occupies 199–364 (ISLYENGVNG…WALLNFLLPD (166 aa)). Position 212-219 (212-219 (DEMGLGKT)) interacts with ATP. Positions 315–318 (DEAH) match the DEAH box motif. Positions 494–645 (ALDKLLARIK…SIVIQQGRLI (152 aa)) constitute a Helicase C-terminal domain. Glycyl lysine isopeptide (Lys-Gly) (interchain with G-Cter in SUMO2) cross-links involve residues K654, K720, and K742. The disordered stretch occupies residues 819-840 (AQREEQKKIDGAEPLTPQETEE). Residues 820 to 829 (QREEQKKIDG) show a composition bias toward basic and acidic residues. One can recognise an SANT 1 domain in the interval 847–899 (QGFTNWTKRDFNQFIKANEKYGRDDIDNIAREVEGKSPEEVMEYSAVFWERCN). At Y946 the chain carries Phosphotyrosine. Residues 950–1014 (KGKNYTEEED…QRRCNTLISL (65 aa)) enclose the SANT 2 domain. The stretch at 1003-1037 (EFQRRCNTLISLIEKENMEIEERERAEKKKRATKT) forms a coiled coil. A disordered region spans residues 1025-1046 (RERAEKKKRATKTPMVKFSAFS).

The protein belongs to the SNF2/RAD54 helicase family. ISWI subfamily. May form homodimers. Component of the ACF-1 ISWI chromatin remodeling complex at least composed of SMARCA1 and BAZ1A, which regulates the spacing of histone octamers on the DNA template to facilitate access to DNA. Within the complex interacts with BAZ1A; the interaction is direct. Component of the WICH-1 ISWI chromatin remodeling complex at least composed of SMARCA1 and BAZ1B/WSTF. Within the complex interacts with BAZ1B/WSTF. Component of the NoRC-1 ISWI chromatin remodeling complex at least composed of SMARCA1 and BAZ2A/TIP5. Within the complex interacts with BAZ2A/TIP5. Component of the BRF-1 ISWI chromatin remodeling complex at least composed of SMARCA1 and BAZ2B. Within the complex interacts with BAZ2B. Component of the NURF-1 ISWI chromatin remodeling complex (also called the nucleosome-remodeling factor (NURF) complex) at least composed of SMARCA1, BPTF, RBBP4 and RBBP7. Within the complex interacts with BPTF. Within the complex interacts with RBBP4 and RBBP7. Component of the CERF-1 ISWI chromatin remodeling complex (also called the CECR2-containing-remodeling factor (CERF) complex) at least composed of CECR2 and SMARCA1. LUZP1 is detected as part of the CERF-1 complex in embryonic stem cells where it is involved in complex stabilization but is not detected in the complex in the testis. Component of the RSF-1 ISWI chromatin remodeling complex at least composed of SMARCA1 and RSF1. Within the complex interacts with RSF1. Interacts with PRLR. Interacts with ERCC6. In terms of tissue distribution, predominantly expressed in cortex, cerebellum, ovaries, testes, uterus and placenta.

The protein resides in the nucleus. It catalyses the reaction ATP + H2O = ADP + phosphate + H(+). In terms of biological role, ATPase that possesses intrinsic ATP-dependent chromatin-remodeling activity. ATPase activity is substrate-dependent, and is increased when nucleosomes are the substrate, but is also catalytically active when DNA alone is the substrate. Catalytic subunit of ISWI chromatin-remodeling complexes, which form ordered nucleosome arrays on chromatin and facilitate access to DNA during DNA-templated processes such as DNA replication, transcription, and repair. Within the ISWI chromatin-remodeling complexes, slides edge- and center-positioned histone octamers away from their original location on the DNA template. Catalytic activity and histone octamer sliding propensity is regulated and determined by components of the ISWI chromatin-remodeling complexes. The BAZ1A-, BAZ1B-, BAZ2A- and BAZ2B-containing ISWI chromatin-remodeling complexes regulate the spacing of nucleosomes along the chromatin and have the ability to slide mononucleosomes to the center of a DNA template. The CECR2- and RSF1-containing ISWI chromatin-remodeling complexes do not have the ability to slide mononucleosomes to the center of a DNA template. Within the NURF-1 and CERF-1 ISWI chromatin remodeling complexes, nucleosomes are the preferred substrate for its ATPase activity. Within the NURF-1 ISWI chromatin-remodeling complex, binds to the promoters of En1 and En2 to positively regulate their expression and promote brain development. May promote neurite outgrowth. May be involved in the development of luteal cells. Facilitates nucleosome assembly during DNA replication, ensuring replication fork progression and genomic stability by preventing replication stress and nascent DNA gaps. This is SWI/SNF-related matrix-associated actin-dependent regulator of chromatin subfamily A member 1 (Smarca1) from Mus musculus (Mouse).